A 387-amino-acid polypeptide reads, in one-letter code: MKIHIVQKGDSLWKIAEKYGVDVEEVKKLNTQLSNPDLIMPGMKIKVPSEGVPVRKEPKAGKSPAAGSVKQEHPYAKEKPKSVVDVEDTKPKEKKSMPYVPPMPNLQENVYPEADVNDYYDMKQLFQPWSPPKPEEPKKHHDGNMDHMYHMQDQFPQQEAMSNMENANYPNMPNMPKAPEVGGIEEENVHHTVPNMPMPAVQPYYHYPAHFVPCPVPVSPILPGSGLCYPYYPAQAYPMHPMHGYQPGFVSPQYDPGYENQHHENSHHGHYGSYGAPQYASPAYGSPYGHMPYGPYYGTPQVMGAYQPAAAHGYMPYKDHDDCGCDGDHQPYFSAPGHSGMGAYGSPNMPYGTANPNPNPYSAGVSMPMTNQPSVNQMFGRPEEENE.

Residues 2–47 (KIHIVQKGDSLWKIAEKYGVDVEEVKKLNTQLSNPDLIMPGMKIKV) enclose the LysM domain. 2 disordered regions span residues 49–106 (SEGV…MPNL) and 355–387 (NPNPNPYSAGVSMPMTNQPSVNQMFGRPEEENE). A compositionally biased stretch (basic and acidic residues) spans 70-96 (KQEHPYAKEKPKSVVDVEDTKPKEKKS). The span at 368-377 (PMTNQPSVNQ) shows a compositional bias: polar residues.

The protein localises to the spore cortex. Probably involved in the assembly of some coat protein components implicated in both lysozyme resistance and germination. Could be required for the assembly of CotG. Associates with SpoIVD during the early stage of coat assembly. The chain is SpoIVD-associated factor A (safA) from Bacillus subtilis (strain 168).